Reading from the N-terminus, the 249-residue chain is Probable transcriptional regulatory protein LBL_2537 (249 aa).

Belongs to the TACO1 family.

The protein resides in the cytoplasm. In Leptospira borgpetersenii serovar Hardjo-bovis (strain L550), this protein is Probable transcriptional regulatory protein LBL_2537.